A 371-amino-acid polypeptide reads, in one-letter code: S-adenosylmethionine:tRNA ribosyltransferase-isomerase (371 aa).

This sequence belongs to the QueA family. In terms of assembly, monomer.

The protein resides in the cytoplasm. It catalyses the reaction 7-aminomethyl-7-carbaguanosine(34) in tRNA + S-adenosyl-L-methionine = epoxyqueuosine(34) in tRNA + adenine + L-methionine + 2 H(+). It functions in the pathway tRNA modification; tRNA-queuosine biosynthesis. Its function is as follows. Transfers and isomerizes the ribose moiety from AdoMet to the 7-aminomethyl group of 7-deazaguanine (preQ1-tRNA) to give epoxyqueuosine (oQ-tRNA). The sequence is that of S-adenosylmethionine:tRNA ribosyltransferase-isomerase from Nitratidesulfovibrio vulgaris (strain ATCC 29579 / DSM 644 / CCUG 34227 / NCIMB 8303 / VKM B-1760 / Hildenborough) (Desulfovibrio vulgaris).